Consider the following 95-residue polypeptide: Large ribosomal subunit protein bL27 (95 aa).

Residues Met1–Phe9 constitute a propeptide that is removed on maturation.

Belongs to the bacterial ribosomal protein bL27 family. In terms of processing, the N-terminus is cleaved by ribosomal processing cysteine protease Prp.

The protein is Large ribosomal subunit protein bL27 of Agathobacter rectalis (strain ATCC 33656 / DSM 3377 / JCM 17463 / KCTC 5835 / VPI 0990) (Eubacterium rectale).